Here is a 316-residue protein sequence, read N- to C-terminus: MTVIDNHEALAKDGELSEASARDYFELLKPRVMSLVVFTAFAGLVLAPGQINPVLGLIAILCIAVGAGASGALNMWYDADIDAIMSRTAKRPIPAGRIAPSEALAFGLVLSCFSVAILGLAVNWLSAGILAFTIFFYAVIYTMWLKRSTPQNIVIGGAAGAFPPMIGWACVTNSVTIESTVLFLIIFLWTPAHFWALALFKMRDYEAVGVPMLPNVSGERVTKHQIVAYAVLTAICAVLPSYLGFASFAYGLVAAALGAIFIYCSIAVWRMPDGDLKMIPAKKLFAFSIFYLFAIFSALMIDRLAAMLVSYAGGSL.

Helical transmembrane passes span 32–52 (VMSLVVFTAFAGLVLAPGQIN), 53–73 (PVLGLIAILCIAVGAGASGAL), 93–113 (IPAGRIAPSEALAFGLVLSCF), 116–136 (AILGLAVNWLSAGILAFTIFF), 152–172 (NIVIGGAAGAFPPMIGWACVT), 180–200 (TVLFLIIFLWTPAHFWALALF), 226–246 (IVAYAVLTAICAVLPSYLGFA), 248–268 (FAYGLVAAALGAIFIYCSIAV), and 289–309 (IFYLFAIFSALMIDRLAAMLV).

Belongs to the UbiA prenyltransferase family. Protoheme IX farnesyltransferase subfamily.

It is found in the cell inner membrane. It catalyses the reaction heme b + (2E,6E)-farnesyl diphosphate + H2O = Fe(II)-heme o + diphosphate. It functions in the pathway porphyrin-containing compound metabolism; heme O biosynthesis; heme O from protoheme: step 1/1. Functionally, converts heme B (protoheme IX) to heme O by substitution of the vinyl group on carbon 2 of heme B porphyrin ring with a hydroxyethyl farnesyl side group. The polypeptide is Protoheme IX farnesyltransferase (Rhizobium etli (strain CIAT 652)).